A 63-amino-acid polypeptide reads, in one-letter code: UPF0434 protein Sde_1297 (63 aa).

Belongs to the UPF0434 family.

In Saccharophagus degradans (strain 2-40 / ATCC 43961 / DSM 17024), this protein is UPF0434 protein Sde_1297.